The following is a 170-amino-acid chain: Cyclic pyranopterin monophosphate synthase (170 aa).

Substrate-binding positions include Leu-89–His-91 and Met-125–Glu-126. The active site involves Asp-140.

This sequence belongs to the MoaC family. As to quaternary structure, homohexamer; trimer of dimers.

The enzyme catalyses (8S)-3',8-cyclo-7,8-dihydroguanosine 5'-triphosphate = cyclic pyranopterin phosphate + diphosphate. It functions in the pathway cofactor biosynthesis; molybdopterin biosynthesis. Catalyzes the conversion of (8S)-3',8-cyclo-7,8-dihydroguanosine 5'-triphosphate to cyclic pyranopterin monophosphate (cPMP). In Streptomyces avermitilis (strain ATCC 31267 / DSM 46492 / JCM 5070 / NBRC 14893 / NCIMB 12804 / NRRL 8165 / MA-4680), this protein is Cyclic pyranopterin monophosphate synthase.